A 143-amino-acid chain; its full sequence is uncharacterized protein (143 aa).

This sequence belongs to the SufE family.

This is an uncharacterized protein from Mycobacterium tuberculosis (strain CDC 1551 / Oshkosh).